A 533-amino-acid chain; its full sequence is DELLA protein 2 (533 aa).

Positions 1–12 (MKREHKLEHEDM) are enriched in basic and acidic residues. The segment at 1–24 (MKREHKLEHEDMSSGSGKSGVCWE) is disordered. The DELLA motif motif lies at 31 to 35 (DELLA). In terms of domain architecture, GRAS spans 157 to 522 (VETQEKGIRL…RPLIATSAWK (366 aa)). Residues 164-218 (IRLVHSLMACAEAVEQNNLKMAEALVKQIGYLAVSQEGAMRKVATYFAEGLARRI) form a leucine repeat I (LRI) region. Residues 166–203 (LVHSLMACAEAVEQNNLKMAEALVKQIGYLAVSQEGAM) are required for possible homodimerization. The LxCxE motif; degenerate signature appears at 171-175 (MACAE). The segment at 232–297 (QIHFYETCPN…GGPPAFRLTG (66 aa)) is VHIID. Residues 263-267 (VHVID) carry the VHIID motif. Residues 311-343 (QVGWRLAQFAQTIHVQFEYRGFVANSLADLDAS) are leucine repeat II (LRII). Positions 355–443 (VAVNSVFELH…EVYLGKQICN (89 aa)) are PFYRE. The LXXLL motif; degenerate signature appears at 363–367 (LHKLN). The interval 446-522 (ACEGTDRVER…RPLIATSAWK (77 aa)) is SAW.

It belongs to the GRAS family. DELLA subfamily. In terms of assembly, may be a homodimer. Post-translationally, ubiquitinated. Upon GA application it is ubiquitinated, leading to its subsequent degradation.

It is found in the nucleus. Functionally, probable transcriptional regulator that acts as a repressor of the gibberellin (GA) signaling pathway. Probably acts by participating in large multiprotein complexes that repress transcription of GA-inducible genes. Upon GA application, it is degraded by the proteasome, allowing the GA signaling pathway. Together with DELLA1, required to enable arbuscule development during arbuscular mycorrhizal (AM) symbiosis with AM fungi (e.g. Glomus versiforme) via the regulation of RAM1 which, in turn, regulates various AM genes (e.g. NSP1, NSP2, PT4, LEC5, RAM2, EXO70I, STR and RAD1). The protein is DELLA protein 2 of Medicago truncatula (Barrel medic).